The primary structure comprises 233 residues: MARKVVVVDDEKPIADILEFNLKKEGYDVYCAYDGNDAVDLIYEEEPDIVLLDIMLPGRDGMEVCREVRKKYEMPIIMLTAKDSEIDKVLGLELGADDYVTKPFSTRELIARVKANLRRHYSQPAQDTGNVTNEITIKDIVIYPDAYSIKKRGEDIELTHREFELFHYLSKHMGQVMTREHLLQTVWGYDYFGDVRTVDVTIRRLREKIEDDPSHPEYIVTRRGVGYFLQQHE.

Residues 4–117 (KVVVVDDEKP…ELIARVKANL (114 aa)) enclose the Response regulatory domain. 4-aspartylphosphate is present on aspartate 53. Threonine 101 bears the Phosphothreonine mark. A DNA-binding region (ompR/PhoB-type) is located at residues 132–231 (TNEITIKDIV…RRGVGYFLQQ (100 aa)).

Post-translationally, phosphorylated by WalK on Asp-53. Phosphorylated by PknB on Thr-101.

The protein localises to the cytoplasm. Functionally, member of the two-component regulatory system WalK/WalR that regulates genes involved in cell wall metabolism, virulence regulation, biofilm production, oxidative stress resistance and antibiotic resistance via direct or indirect regulation of autolysins. Functions as a transcription regulator by direct binding to promoter regions. The sequence is that of Transcriptional regulatory protein WalR (walR) from Staphylococcus aureus (strain Mu3 / ATCC 700698).